The primary structure comprises 100 residues: Urease subunit gamma (100 aa).

Belongs to the urease gamma subunit family. Heterotrimer of UreA (gamma), UreB (beta) and UreC (alpha) subunits. Three heterotrimers associate to form the active enzyme.

It localises to the cytoplasm. It catalyses the reaction urea + 2 H2O + H(+) = hydrogencarbonate + 2 NH4(+). It participates in nitrogen metabolism; urea degradation; CO(2) and NH(3) from urea (urease route): step 1/1. This is Urease subunit gamma from Mycolicibacterium smegmatis (strain ATCC 700084 / mc(2)155) (Mycobacterium smegmatis).